We begin with the raw amino-acid sequence, 184 residues long: Histone H3-like centromeric protein CSE4 (184 aa).

Positions 54–81 (YIQPERSASSQQIHPPEHHISAHERITK) are disordered. Basic and acidic residues predominate over residues 68-80 (PPEHHISAHERIT). The interval 82–182 (ARGTRYKPTD…MQLARRIRGQ (101 aa)) is H3-like.

Belongs to the histone H3 family. In terms of assembly, component of centromeric nucleosomes, where DNA is wrapped around a histone octamer core. The octamer contains two molecules each of H2A, H2B, CSE4/CENPA and H4 assembled in one CSE4-H4 heterotetramer and two H2A-H2B heterodimers. Interacts with the inner kinetochore. In terms of processing, ubiquitinated. Is degraded through ubiquitin-mediated proteolysis when not protected by its association to the kinetochore.

It is found in the nucleus. It localises to the chromosome. The protein resides in the centromere. Functionally, histone H3-like nucleosomal protein that is specifically found in centromeric nucleosomes. Replaces conventional H3 in the nucleosome core of centromeric chromatin that serves as an assembly site for the inner kinetochore. Required for recruitment and assembly of kinetochore proteins, mitotic progression and chromosome segregation. May serve as an epigenetic mark that propagates centromere identity through replication and cell division. In Kluyveromyces lactis (strain ATCC 8585 / CBS 2359 / DSM 70799 / NBRC 1267 / NRRL Y-1140 / WM37) (Yeast), this protein is Histone H3-like centromeric protein CSE4 (CSE4).